Consider the following 970-residue polypeptide: Longitudinals lacking protein, isoforms F/I/K/T (970 aa).

The BTB domain maps to 32–97; the sequence is VDCTLAAEGK…MYRGEVNISQ (66 aa). 4 disordered regions span residues 115–200, 228–340, 447–468, and 790–843; these read LSDN…SSVL, SSGP…ASAS, DAQQ…EGAQ, and QTVH…LQDD. Composition is skewed to low complexity over residues 162 to 175, 228 to 251, 263 to 293, and 329 to 340; these read SGDV…SSSP, SSGP…LTST, TSST…QTTS, and NSATGPNPASAS. 2 stretches are compositionally biased toward polar residues: residues 447-456 and 808-818; these read DAQQRDPQAS and QLQTHHIQTVV. Low complexity predominate over residues 819 to 828; sequence QSSSGQQQHD. The C2H2-type 1; degenerate zinc-finger motif lies at 903–925; that stretch reads YVCRHCGKKYRWKSTLRRHENVE. The C2H2-type 2 zinc-finger motif lies at 933–955; it reads HPCPYCSYKAKQRGNLGVHVRKH.

In terms of tissue distribution, by stage 11, isoform F is expressed throughout the mesoderm whereas isoform T, and at low levels isoform I, is expressed throughout the ectoderm. Isoform K is expressed in both mesoderm and ectoderm. Expression becomes restricted during later stages; starting from stage 14 to 15, isoform F is expressed in the gut. Isoform I is expressed in the CNS. Isoform I and isoform F show expression in the epithelium starting at stage 14, though for isoform I the CNS expression remains predominant. Expression is also seen in specific types of cells in the embryo; isoform K is expressed in the ventral furrow at stage 5 and in a dynamic pattern in the ventral neurogenic region starting at stage 7. Isoform T is expressed around the tracheal pits at stage 11. Isoform F shows transient enrichment in a dorsal cell layer in the CNS at stages 13 and 14.

The protein resides in the nucleus. Its function is as follows. Putative transcription factor required for axon growth and guidance in the central and peripheral nervous systems. Repels CNS axons away from the midline by promoting the expression of the midline repellent sli and its receptor robo. This Drosophila melanogaster (Fruit fly) protein is Longitudinals lacking protein, isoforms F/I/K/T.